Here is a 254-residue protein sequence, read N- to C-terminus: 4-hydroxy-tetrahydrodipicolinate reductase (254 aa).

Position 7–12 (7–12) interacts with NAD(+); it reads GASGRI. Residue Arg-35 coordinates NADP(+). NAD(+)-binding positions include 91–93 and 115–118; these read GTT and AHNM. The Proton donor/acceptor role is filled by His-147. Residue His-148 coordinates (S)-2,3,4,5-tetrahydrodipicolinate. Residue Lys-151 is the Proton donor of the active site. 157-158 provides a ligand contact to (S)-2,3,4,5-tetrahydrodipicolinate; it reads GT.

Belongs to the DapB family.

Its subcellular location is the cytoplasm. The enzyme catalyses (S)-2,3,4,5-tetrahydrodipicolinate + NAD(+) + H2O = (2S,4S)-4-hydroxy-2,3,4,5-tetrahydrodipicolinate + NADH + H(+). It catalyses the reaction (S)-2,3,4,5-tetrahydrodipicolinate + NADP(+) + H2O = (2S,4S)-4-hydroxy-2,3,4,5-tetrahydrodipicolinate + NADPH + H(+). It participates in amino-acid biosynthesis; L-lysine biosynthesis via DAP pathway; (S)-tetrahydrodipicolinate from L-aspartate: step 4/4. In terms of biological role, catalyzes the conversion of 4-hydroxy-tetrahydrodipicolinate (HTPA) to tetrahydrodipicolinate. The sequence is that of 4-hydroxy-tetrahydrodipicolinate reductase from Helicobacter pylori (strain G27).